Here is a 297-residue protein sequence, read N- to C-terminus: Protoheme IX farnesyltransferase (297 aa).

A run of 9 helical transmembrane segments spans residues 23–43 (VTQL…PGLP), 49–69 (VFGT…NCLI), 90–110 (ISAA…MLVL), 117–137 (LTMW…TVIL), 144–164 (NIVI…AAVA), 171–191 (AWVL…ALAL), 215–235 (RLHI…PYII), 238–258 (SGLL…AYAW), and 277–297 (ILYL…GLLA).

This sequence belongs to the UbiA prenyltransferase family. Protoheme IX farnesyltransferase subfamily.

It localises to the cell inner membrane. The enzyme catalyses heme b + (2E,6E)-farnesyl diphosphate + H2O = Fe(II)-heme o + diphosphate. The protein operates within porphyrin-containing compound metabolism; heme O biosynthesis; heme O from protoheme: step 1/1. Converts heme B (protoheme IX) to heme O by substitution of the vinyl group on carbon 2 of heme B porphyrin ring with a hydroxyethyl farnesyl side group. The protein is Protoheme IX farnesyltransferase of Bordetella petrii (strain ATCC BAA-461 / DSM 12804 / CCUG 43448).